Here is a 443-residue protein sequence, read N- to C-terminus: DILAAFRVTPQPGVPPEEAGAAVAAESSTGTWTTVWTDGLTSLDRYKGRCYHIEPVPGETDQYICYVAYPLDLFEEGSVTNMFTSIVGNVFGFKALRALRLEDLRIPPAYIKTFQGPPHGVQVERDKLNKYGRPLLGCTIKPKLGLSAKNYGRAVYECLRGGLDFTKDDENVNSQPFMRWRDRFLFCAEALYKAQAETGEIKGHYLNATAGTCEEMIKRAVFARELGVPIVMHDYLTGGFTANTSLAHYCRDNGLLLHIHRAMHAVIDRQKNHGIHFRVLAKALRMSGGDHIHSGTVVGKLEGERDITLGFVDLLRDDFIEKDRSRGIYFTQDWVSLPGVIPVASGGIHVWHMPALTEIFGDDSVLQFGGGTLGHPWGNAPGAVANRVALEACVQARNEGRDLAAEGNAIIREASKWSPELAAACEVWKEIKFEFKAVDTLDK.

Residues N89 and T139 each contribute to the substrate site. K141 functions as the Proton acceptor in the catalytic mechanism. Residue K143 participates in substrate binding. K167, D169, and E170 together coordinate Mg(2+). N6-carboxylysine is present on K167. Catalysis depends on H260, which acts as the Proton acceptor. Substrate contacts are provided by R261, H293, and S345.

Belongs to the RuBisCO large chain family. Type I subfamily. In terms of assembly, heterohexadecamer of 8 large chains and 8 small chains; disulfide-linked. The disulfide link is formed within the large subunit homodimers. Mg(2+) serves as cofactor. The disulfide bond which can form in the large chain dimeric partners within the hexadecamer appears to be associated with oxidative stress and protein turnover.

It localises to the plastid. The protein resides in the chloroplast. It carries out the reaction 2 (2R)-3-phosphoglycerate + 2 H(+) = D-ribulose 1,5-bisphosphate + CO2 + H2O. It catalyses the reaction D-ribulose 1,5-bisphosphate + O2 = 2-phosphoglycolate + (2R)-3-phosphoglycerate + 2 H(+). RuBisCO catalyzes two reactions: the carboxylation of D-ribulose 1,5-bisphosphate, the primary event in carbon dioxide fixation, as well as the oxidative fragmentation of the pentose substrate in the photorespiration process. Both reactions occur simultaneously and in competition at the same active site. The polypeptide is Ribulose bisphosphate carboxylase large chain (Buddleja davidii (Butterfly bush)).